We begin with the raw amino-acid sequence, 478 residues long: Aspartyl/glutamyl-tRNA(Asn/Gln) amidotransferase subunit B (478 aa).

This sequence belongs to the GatB/GatE family. GatB subfamily. Heterotrimer of A, B and C subunits.

It carries out the reaction L-glutamyl-tRNA(Gln) + L-glutamine + ATP + H2O = L-glutaminyl-tRNA(Gln) + L-glutamate + ADP + phosphate + H(+). It catalyses the reaction L-aspartyl-tRNA(Asn) + L-glutamine + ATP + H2O = L-asparaginyl-tRNA(Asn) + L-glutamate + ADP + phosphate + 2 H(+). Its function is as follows. Allows the formation of correctly charged Asn-tRNA(Asn) or Gln-tRNA(Gln) through the transamidation of misacylated Asp-tRNA(Asn) or Glu-tRNA(Gln) in organisms which lack either or both of asparaginyl-tRNA or glutaminyl-tRNA synthetases. The reaction takes place in the presence of glutamine and ATP through an activated phospho-Asp-tRNA(Asn) or phospho-Glu-tRNA(Gln). In Brevibacillus brevis (strain 47 / JCM 6285 / NBRC 100599), this protein is Aspartyl/glutamyl-tRNA(Asn/Gln) amidotransferase subunit B.